The chain runs to 658 residues: Endoplasmic reticulum mannosyl-oligosaccharide 1,2-alpha-mannosidase (658 aa).

At 1–50 the chain is on the cytoplasmic side; the sequence is MYPPPAPPPAPHRDFISVTLSLGESYDNSKSRRRRSCWRKWKQLSRLQRN. A helical; Signal-anchor for type II membrane protein membrane pass occupies residues 51–71; the sequence is VILFVLGFLILCGFLYSLHTA. The Lumenal portion of the chain corresponds to 72-658; the sequence is DQWKALSGRP…AHPLPIWAPA (587 aa). At S102 the chain carries Phosphoserine. Residues 123-142 are disordered; it reads GPPHLQIRPPNTVSKDGMQD. E289 serves as the catalytic Proton donor. Residue D422 is part of the active site. A disulfide bond links C486 and C515. Residue E529 is the Proton donor of the active site. E558 is a catalytic residue. Residue T647 coordinates Ca(2+).

The protein belongs to the glycosyl hydrolase 47 family. Ca(2+) is required as a cofactor.

The protein localises to the endoplasmic reticulum membrane. It carries out the reaction N(4)-(alpha-D-Man-(1-&gt;2)-alpha-D-Man-(1-&gt;2)-alpha-D-Man-(1-&gt;3)-[alpha-D-Man-(1-&gt;2)-alpha-D-Man-(1-&gt;3)-[alpha-D-Man-(1-&gt;2)-alpha-D-Man-(1-&gt;6)]-alpha-D-Man-(1-&gt;6)]-beta-D-Man-(1-&gt;4)-beta-D-GlcNAc-(1-&gt;4)-beta-D-GlcNAc)-L-asparaginyl-[protein] (N-glucan mannose isomer 9A1,2,3B1,2,3) + 4 H2O = N(4)-(alpha-D-Man-(1-&gt;3)-[alpha-D-Man-(1-&gt;3)-[alpha-D-Man-(1-&gt;6)]-alpha-D-Man-(1-&gt;6)]-beta-D-Man-(1-&gt;4)-beta-D-GlcNAc-(1-&gt;4)-beta-D-GlcNAc)-L-asparaginyl-[protein] (N-glucan mannose isomer 5A1,2) + 4 beta-D-mannose. The enzyme catalyses N(4)-(alpha-D-Man-(1-&gt;2)-alpha-D-Man-(1-&gt;2)-alpha-D-Man-(1-&gt;3)-[alpha-D-Man-(1-&gt;3)-[alpha-D-Man-(1-&gt;2)-alpha-D-Man-(1-&gt;6)]-alpha-D-Man-(1-&gt;6)]-beta-D-Man-(1-&gt;4)-beta-D-GlcNAc-(1-&gt;4)-beta-D-GlcNAc)-L-asparaginyl-[protein] (N-glucan mannose isomer 8A1,2,3B1,3) + 3 H2O = N(4)-(alpha-D-Man-(1-&gt;3)-[alpha-D-Man-(1-&gt;3)-[alpha-D-Man-(1-&gt;6)]-alpha-D-Man-(1-&gt;6)]-beta-D-Man-(1-&gt;4)-beta-D-GlcNAc-(1-&gt;4)-beta-D-GlcNAc)-L-asparaginyl-[protein] (N-glucan mannose isomer 5A1,2) + 3 beta-D-mannose. It functions in the pathway protein modification; protein glycosylation. Involved in glycoprotein quality control targeting of misfolded glycoproteins for degradation. It primarily trims a single alpha-1,2-linked mannose residue from Man(9)GlcNAc(2) to produce Man(8)GlcNAc(2), but at high enzyme concentrations, as found in the ER quality control compartment (ERQC), it further trims the carbohydrates to Man(5-6)GlcNAc(2). The protein is Endoplasmic reticulum mannosyl-oligosaccharide 1,2-alpha-mannosidase (Man1b1) of Mus musculus (Mouse).